We begin with the raw amino-acid sequence, 154 residues long: Cysteine-rich DPF motif domain-containing protein 1 (154 aa).

The protein belongs to the CDPF1 family.

The polypeptide is Cysteine-rich DPF motif domain-containing protein 1 (Drosophila melanogaster (Fruit fly)).